Consider the following 303-residue polypeptide: 2-phospho-L-lactate transferase (303 aa).

7,8-didemethyl-8-hydroxy-5-deazariboflavin is bound by residues Asp48 and Lys87.

Belongs to the CofD family. As to quaternary structure, homodimer. The cofactor is Mg(2+).

It carries out the reaction (2S)-lactyl-2-diphospho-5'-guanosine + 7,8-didemethyl-8-hydroxy-5-deazariboflavin = oxidized coenzyme F420-0 + GMP + H(+). It functions in the pathway cofactor biosynthesis; coenzyme F420 biosynthesis. Catalyzes the transfer of the 2-phospholactate moiety from (2S)-lactyl-2-diphospho-5'-guanosine to 7,8-didemethyl-8-hydroxy-5-deazariboflavin (FO) with the formation of oxidized coenzyme F420-0 and GMP. The polypeptide is 2-phospho-L-lactate transferase (Methanosarcina mazei (strain ATCC BAA-159 / DSM 3647 / Goe1 / Go1 / JCM 11833 / OCM 88) (Methanosarcina frisia)).